The chain runs to 273 residues: Ribosomal RNA small subunit methyltransferase A (273 aa).

Residues Asn18, Leu20, Gly45, Glu66, Asp91, and Asn113 each coordinate S-adenosyl-L-methionine.

This sequence belongs to the class I-like SAM-binding methyltransferase superfamily. rRNA adenine N(6)-methyltransferase family. RsmA subfamily.

It is found in the cytoplasm. It catalyses the reaction adenosine(1518)/adenosine(1519) in 16S rRNA + 4 S-adenosyl-L-methionine = N(6)-dimethyladenosine(1518)/N(6)-dimethyladenosine(1519) in 16S rRNA + 4 S-adenosyl-L-homocysteine + 4 H(+). Specifically dimethylates two adjacent adenosines (A1518 and A1519) in the loop of a conserved hairpin near the 3'-end of 16S rRNA in the 30S particle. May play a critical role in biogenesis of 30S subunits. This chain is Ribosomal RNA small subunit methyltransferase A, found in Escherichia fergusonii (strain ATCC 35469 / DSM 13698 / CCUG 18766 / IAM 14443 / JCM 21226 / LMG 7866 / NBRC 102419 / NCTC 12128 / CDC 0568-73).